Here is a 23-residue protein sequence, read N- to C-terminus: NADH-ubiquinone oxidoreductase 29 kDa subunit (23 aa).

As to quaternary structure, complex I is composed of about 45 different subunits.

It localises to the mitochondrion inner membrane. It carries out the reaction a ubiquinone + NADH + 5 H(+)(in) = a ubiquinol + NAD(+) + 4 H(+)(out). Transfer of electrons from NADH to the respiratory chain. The immediate electron acceptor for the enzyme is believed to be ubiquinone. In Solanum tuberosum (Potato), this protein is NADH-ubiquinone oxidoreductase 29 kDa subunit.